The primary structure comprises 419 residues: UDP-N-acetylglucosamine 1-carboxyvinyltransferase (419 aa).

22 to 23 contacts phosphoenolpyruvate; sequence KN. Position 93 (Arg-93) interacts with UDP-N-acetyl-alpha-D-glucosamine. Catalysis depends on Cys-117, which acts as the Proton donor. At Cys-117 the chain carries 2-(S-cysteinyl)pyruvic acid O-phosphothioketal. Positions 306 and 328 each coordinate UDP-N-acetyl-alpha-D-glucosamine.

The protein belongs to the EPSP synthase family. MurA subfamily.

It is found in the cytoplasm. The catalysed reaction is phosphoenolpyruvate + UDP-N-acetyl-alpha-D-glucosamine = UDP-N-acetyl-3-O-(1-carboxyvinyl)-alpha-D-glucosamine + phosphate. The protein operates within cell wall biogenesis; peptidoglycan biosynthesis. Its function is as follows. Cell wall formation. Adds enolpyruvyl to UDP-N-acetylglucosamine. This is UDP-N-acetylglucosamine 1-carboxyvinyltransferase from Idiomarina loihiensis (strain ATCC BAA-735 / DSM 15497 / L2-TR).